A 191-amino-acid polypeptide reads, in one-letter code: Protein Ves (191 aa).

Belongs to the Ves family.

In Escherichia coli (strain SE11), this protein is Protein Ves.